Consider the following 222-residue polypeptide: Eukaryotic translation initiation factor 3 subunit K (222 aa).

Positions 46–208 (YDLEANLAVL…KIKTKNITEK (163 aa)) constitute a PCI domain.

Belongs to the eIF-3 subunit K family. As to quaternary structure, component of the eukaryotic translation initiation factor 3 (eIF-3) complex. The eIF-3 complex interacts with pix.

It localises to the cytoplasm. Component of the eukaryotic translation initiation factor 3 (eIF-3) complex, which is involved in protein synthesis of a specialized repertoire of mRNAs and, together with other initiation factors, stimulates binding of mRNA and methionyl-tRNAi to the 40S ribosome. The eIF-3 complex specifically targets and initiates translation of a subset of mRNAs involved in cell proliferation. The polypeptide is Eukaryotic translation initiation factor 3 subunit K (Drosophila virilis (Fruit fly)).